The sequence spans 302 residues: MFFKNLQVYRFTRPLEQDIDTLERNLEEFKFKPCGSQDISKLGWVFPMGKSGSMYTHIAGKQILICLKKEEKMLPAGVIKDQLNERVEAIELEQGRALKKKEKDSLKEEIVMQLLPRAFSRTSQTFAWIDSESDMLYVDASSTRKAEELISLLRKTLGSLPIVPIQLKNQADVIMTDWLTEGNIPANFALEDEAELCSALEGGGIIRCKQQDLLSDEIKNHLSADKFVTKLALCWADSISFIIGEEFALKRIKFADVLQEQNEDIDKDDFAARFDADFALMTGEIKQLIPAVLAAFGGEQSL.

It belongs to the RdgC family.

It is found in the cytoplasm. Its subcellular location is the nucleoid. May be involved in recombination. In Psychromonas ingrahamii (strain DSM 17664 / CCUG 51855 / 37), this protein is Recombination-associated protein RdgC.